The primary structure comprises 135 residues: Large ribosomal subunit protein uL16c (135 aa).

It belongs to the universal ribosomal protein uL16 family. In terms of assembly, part of the 50S ribosomal subunit.

It localises to the plastid. Its subcellular location is the chloroplast. This chain is Large ribosomal subunit protein uL16c, found in Lepidium virginicum (Virginia pepperweed).